A 299-amino-acid polypeptide reads, in one-letter code: NmrA-like family domain-containing protein 1 (299 aa).

Residues glycine 11–glutamine 16, arginine 37–glutamine 41, aspartate 58–glutamine 59, threonine 79–tyrosine 81, lysine 92, lysine 133, and tyrosine 155–asparagine 158 each bind NADP(+). The segment at proline 153 to serine 189 is interaction with ASS1.

Belongs to the NmrA-type oxidoreductase family. In terms of assembly, homodimer. Interacts with ASS1. Interaction is enhanced by low NADPH/NADP(+) ratios, which results in inhibition of ASS1 activity.

The protein localises to the cytoplasm. Its subcellular location is the perinuclear region. The protein resides in the nucleus. Its function is as follows. Redox sensor protein. Undergoes restructuring and subcellular redistribution in response to changes in intracellular NADPH/NADP(+) levels. At low NADPH concentrations the protein is found mainly as a monomer, and binds argininosuccinate synthase (ASS1), the enzyme involved in nitric oxide synthesis. Association with ASS1 impairs its activity and reduces the production of nitric oxide, which subsecuently prevents apoptosis. Under normal NADPH concentrations, the protein is found as a dimer and hides the binding site for ASS1. The homodimer binds one molecule of NADPH. Has higher affinity for NADPH than for NADP(+). Binding to NADPH is necessary to form a stable dimer. This Bos taurus (Bovine) protein is NmrA-like family domain-containing protein 1 (NMRAL1).